Consider the following 453-residue polypeptide: MLIHPEEILETIHMIKAENFDIRTVTMGINLRGCCHSDIDVFNKNIYNKITGYAKELVRTTEEVQNLYGIPITNKRIAVTPIAIVAESCNTEDYVSIAKTLDRAAEDVGIDFIGGFSALVHKGITPGDMKLINSIPQALASTKKVCASINVATTKAGINMDAVAMMGHIVKKTAEATKDADGIGCAKLVIFANAPEDNPFMAGAFHGIGEPDCVINVGVSGPGVVNSAVRELKDPDLGEISEAIKKTAFKITRMGEMVGREVSRRLNVDFGVLDLSLAPTPEIGDSVAAILEAMGLETCGTHGTTAALALLNDAVKKGGSMASSYVGGLSGAFIPVSEDAGMIRAVELGALSLEKLEAMTSVCSVGLDMIAIPGDTSAATISAIIADEMAIGMINKKTTAVRLIPAPGKKVGDSVEFGGLLGRAPVMKVSEFSSEKFIARGGRIPAPIQALTN.

It belongs to the UPF0210 family.

This is UPF0210 protein Mbur_0828 from Methanococcoides burtonii (strain DSM 6242 / NBRC 107633 / OCM 468 / ACE-M).